Reading from the N-terminus, the 125-residue chain is uncharacterized protein (125 aa).

The 99-residue stretch at cysteine 14 to glutamate 112 folds into the HTH hxlR-type domain.

This is an uncharacterized protein from Bacillus subtilis (strain 168).